We begin with the raw amino-acid sequence, 206 residues long: Small ribosomal subunit protein uS5 (206 aa).

Over residues 1 to 15 the composition is skewed to polar residues; that stretch reads MTDTPTKQETQSNKD. The disordered stretch occupies residues 1 to 50; sequence MTDTPTKQETQSNKDNVPGAIPVEQKKNNRNDRKRNRRGDSKNLERDSDW. Residues 38–50 are compositionally biased toward basic and acidic residues; that stretch reads RGDSKNLERDSDW. One can recognise an S5 DRBM domain in the interval 50–113; that stretch reads WQERVVQIRR…SDGKKNLVRV (64 aa).

This sequence belongs to the universal ribosomal protein uS5 family. As to quaternary structure, part of the 30S ribosomal subunit. Contacts proteins S4 and S8.

Functionally, with S4 and S12 plays an important role in translational accuracy. Located at the back of the 30S subunit body where it stabilizes the conformation of the head with respect to the body. The protein is Small ribosomal subunit protein uS5 of Prochlorococcus marinus (strain MIT 9215).